Reading from the N-terminus, the 1009-residue chain is 2-oxoglutarate dehydrogenase, mitochondrial (1009 aa).

A mitochondrion-targeting transit peptide spans methionine 1–phenylalanine 39. 5 residues coordinate thiamine diphosphate: arginine 305, aspartate 404, asparagine 437, isoleucine 439, and glutamine 669. Aspartate 404, asparagine 437, and isoleucine 439 together coordinate Mg(2+).

It belongs to the alpha-ketoglutarate dehydrogenase family. It depends on thiamine diphosphate as a cofactor. The cofactor is Mg(2+).

The protein localises to the mitochondrion matrix. It catalyses the reaction N(6)-[(R)-lipoyl]-L-lysyl-[protein] + 2-oxoglutarate + H(+) = N(6)-[(R)-S(8)-succinyldihydrolipoyl]-L-lysyl-[protein] + CO2. With respect to regulation, catabolite repressed. Its function is as follows. The 2-oxoglutarate dehydrogenase complex catalyzes the overall conversion of 2-oxoglutarate to succinyl-CoA and CO(2). It contains multiple copies of three enzymatic components: 2-oxoglutarate dehydrogenase (E1), dihydrolipoamide succinyltransferase (E2) and lipoamide dehydrogenase (E3). This Schizosaccharomyces pombe (strain 972 / ATCC 24843) (Fission yeast) protein is 2-oxoglutarate dehydrogenase, mitochondrial (kgd1).